The primary structure comprises 106 residues: Nucleoid-associated protein XAC1110 (106 aa).

Basic and acidic residues predominate over residues 80 to 89 (KIDAESKDRM). Residues 80–106 (KIDAESKDRMGSATAGMQLPPGMKLPF) form a disordered region.

It belongs to the YbaB/EbfC family. Homodimer.

It localises to the cytoplasm. Its subcellular location is the nucleoid. Functionally, binds to DNA and alters its conformation. May be involved in regulation of gene expression, nucleoid organization and DNA protection. The chain is Nucleoid-associated protein XAC1110 from Xanthomonas axonopodis pv. citri (strain 306).